The sequence spans 66 residues: Protein I177L (66 aa).

Asn-11 carries N-linked (GlcNAc...) asparagine; by host glycosylation.

This sequence belongs to the asfivirus I177L family.

It is found in the virion. The polypeptide is Protein I177L (Ornithodoros (relapsing fever ticks)).